Consider the following 241-residue polypeptide: MRIPLLAPDNYAFPDPAYALAWCDGLVGVSGDLDAGRLLEAYRNGVFPWFSRDGWFFWYAVGPRAVIVPERLHVPRSLAKTLRNGSYRVAVNGCFAEVVAHCAAAARPNQDGTWIAPEFQTAYLKLHEMGHAHSFECHYPDESGETRLAGGFYGVQIGRVFYGESMFALQPDASKIAFACAVPFLADLGVELIDCQQDTEHMRRFGSELLPFADFAERLRMLNAVPLKEEIGRREVVCKGL.

The protein belongs to the L/F-transferase family.

The protein resides in the cytoplasm. The catalysed reaction is N-terminal L-lysyl-[protein] + L-leucyl-tRNA(Leu) = N-terminal L-leucyl-L-lysyl-[protein] + tRNA(Leu) + H(+). It carries out the reaction N-terminal L-arginyl-[protein] + L-leucyl-tRNA(Leu) = N-terminal L-leucyl-L-arginyl-[protein] + tRNA(Leu) + H(+). The enzyme catalyses L-phenylalanyl-tRNA(Phe) + an N-terminal L-alpha-aminoacyl-[protein] = an N-terminal L-phenylalanyl-L-alpha-aminoacyl-[protein] + tRNA(Phe). Its function is as follows. Functions in the N-end rule pathway of protein degradation where it conjugates Leu, Phe and, less efficiently, Met from aminoacyl-tRNAs to the N-termini of proteins containing an N-terminal arginine or lysine. This is Leucyl/phenylalanyl-tRNA--protein transferase from Neisseria meningitidis serogroup C (strain 053442).